The chain runs to 349 residues: Eukaryotic translation initiation factor 3 subunit I (349 aa).

WD repeat units lie at residues 8 to 49 (GHER…GTLE), 51 to 91 (HIGT…QSWE), 93 to 135 (PTPV…DYTK), 148 to 187 (SDAKKVTVAGWSANGDFIIAGHEDGYVSKYNSSTGEFIET), 197 to 239 (EKIA…KVYK), and 295 to 336 (GHFG…FEFD).

This sequence belongs to the eIF-3 subunit I family. As to quaternary structure, component of the eukaryotic translation initiation factor 3 (eIF-3) complex.

The protein localises to the cytoplasm. Functionally, component of the eukaryotic translation initiation factor 3 (eIF-3) complex, which is involved in protein synthesis of a specialized repertoire of mRNAs and, together with other initiation factors, stimulates binding of mRNA and methionyl-tRNAi to the 40S ribosome. The eIF-3 complex specifically targets and initiates translation of a subset of mRNAs involved in cell proliferation. The chain is Eukaryotic translation initiation factor 3 subunit I from Debaryomyces hansenii (strain ATCC 36239 / CBS 767 / BCRC 21394 / JCM 1990 / NBRC 0083 / IGC 2968) (Yeast).